A 63-amino-acid chain; its full sequence is Cytotoxin homolog S3C2 (63 aa).

Intrachain disulfides connect Cys3-Cys22, Cys15-Cys40, Cys44-Cys55, and Cys56-Cys61.

It belongs to the three-finger toxin family. Short-chain subfamily. Orphan group XVI sub-subfamily. Expressed by the venom gland.

It localises to the secreted. The polypeptide is Cytotoxin homolog S3C2 (Aspidelaps scutatus (Shield-nose snake)).